The sequence spans 250 residues: MAETAPLRVQLIAKTEFLAPPDVPWTTDADGGEALVEFAGRACYQSWSKPNPKTATNAGYLRHIIDVGHFAVLEHASVSFYISGISRSCTHELIRHRHFSYSQLSQRYVPEGDSRVVVPPGLEDDPELREILIAAADASRATYTELLTKLEARFADQPNAVLRRKQARQAARAVLPNATETRIVVSGNYRAWRHFIAMRASEHADVEIRRLAIECLRQLVAVAPAVFADFEVTTLADGSEVATSPLATEV.

The region spanning 7–233 (LRVQLIAKTE…PAVFADFEVT (227 aa)) is the ThyX domain. Residues 92–95 (ELIR), 103–107 (QLSQR), and Arg172 contribute to the dUMP site. Residues 95 to 97 (RHR) and Gln103 each bind FAD. Positions 95-105 (RHRHFSYSQLS) match the ThyX motif motif. FAD contacts are provided by residues 188–190 (NYR) and His194. Arg199 contacts dUMP. Catalysis depends on Arg199, which acts as the Involved in ionization of N3 of dUMP, leading to its activation.

Belongs to the thymidylate synthase ThyX family. Homotetramer. The cofactor is FAD.

It catalyses the reaction dUMP + (6R)-5,10-methylene-5,6,7,8-tetrahydrofolate + NADPH + H(+) = dTMP + (6S)-5,6,7,8-tetrahydrofolate + NADP(+). The protein operates within pyrimidine metabolism; dTTP biosynthesis. In terms of biological role, catalyzes the reductive methylation of 2'-deoxyuridine-5'-monophosphate (dUMP) to 2'-deoxythymidine-5'-monophosphate (dTMP) while utilizing 5,10-methylenetetrahydrofolate (mTHF) as the methyl donor, and NADPH and FADH(2) as the reductant. The polypeptide is Flavin-dependent thymidylate synthase (Mycobacterium marinum (strain ATCC BAA-535 / M)).